The primary structure comprises 181 residues: Protein Syd (181 aa).

It belongs to the Syd family.

The protein localises to the cell inner membrane. Functionally, interacts with the SecY protein in vivo. May bind preferentially to an uncomplexed state of SecY, thus functioning either as a chelating agent for excess SecY in the cell or as a regulatory factor that negatively controls the translocase function. This is Protein Syd from Escherichia coli O81 (strain ED1a).